A 1892-amino-acid chain; its full sequence is MKNIFRKFVFTIFVCLINLQLIAASFNEKIPLYFKLTNENLLAGQNALNIDLCDSRIKEWCTKPQRELGLNGKKINDYISISPDIKGEWRFGWWYNINFTPESNFVAHQTYKITIEDYIFPNFVGLKSNNISFTTLPLLPIIKEMNYLQDNIDISKKFVQTKIAFNYPIDPKTLEERIEFIKSSTKEKLPFSIKFNTNNTEATIITNIPPLTDKEDTISVIIKDGVKPLHGGEVFTYKNVKDPNNKTPNNIRYSYKENVLIPSLSSYLKITNSTATIVKDDKLKPEQIIIITTNTPVSGEEIKKHLELFLLPQDKPAFLGVAGKKNYKWQNPKEITDDILKSSEKINFELLSSVPSITTMHSFKVDTFASRALLVKVNQGVKTSDNLTLGSDYFQIVQIPDNPKEVKLMSDGSILSLAGKRKLPVYSLGIDKLYLEIDRINQQEVNHLISQTNRYNIFQNPTFINEYTFNEYNISEVFQEEVIVNSQNLNLPHYTDLDFSKYFNLEEAGSYSKGLFLAKVYAKDNNNIISQDKRLILVTDLGCIVKTDKTGTHHIFVSYISNGKPAGGVKADIIGLNGEVLVSSKTDSKGHAVLSNINDFSKEKTPVAYILTTKDDFAFMPYSRIDRQVNYSRFDVAGAVSSDQGLKAYLFSDRGIYRPNEQGHIGIMLKQTDWQGKFDGLPLEIQVTNPRGKVIDKSKIVLDAEGFGEYLFSTLDDALTGLYNISLYLVGDKGSNNYLNSVSVRVGDFQPDRMKININFNNSQDELWTNPKDLKATVNLINLYGTPAENRKVSGFIDIRPTEFFVPRFKEYKFYSSKGNKEFFYERLGDITTDSKGTANFDLNLEKYYNATFNLTFSAEGFEPDSGRSVNASKSLIVSPLPYIIGFRSDSDLKYIKTKTSAAIEFIAISNKAEKVAAPNLTLNLKKINYVNNLVADSNGNYSYSSVPIETNISSDKINITANESYIYKVPTKEAGDYVIYLTDKEDTIFAQAEFSVIGEGNVTANLTDKANLKVKLDKDDYTAGDTILLNIITPYTGYGLITIETDKVHNFEWFKADENNSIQEIKIPDGFEGKGYVNVQFIRDIEATEIFISPFSYAVVPFTAGIYKHKQDIGLTLPAKIKSGEKLAIRYRTTNPGKIIIFAVDAGILSFAGYQTPDPLNYFINDKALEVRTSQIMDLILPERPLLMKAYMAAPAGDGCINVARNLNPFKRKSQPPIAFWSGILEADLDEREVTFDIPSYFNGTLRVIGVASSLDSIGTSKADLLVQSDLIINPNLPLFVAPNDEFTVPVTIFNNLKDSGNAQVFLNIETSEGLKILDYPKEIPIDENKEATINVKLKATDQLGSADLKVVASINHLKPDIISMAVVHSSELTSTTSVRPASPSVTTVNTGFITDNKANLKILRDVYPEFAKLQISASKSPLAIISGFKDFLDNYPYGCTEQLISQNFANILLYNEQELVQILKTDRKNMDESLSKIFQTLSERQNYDGGFRYWNNFNDDSDPFISVYAMHFLSEGATRYLAVPSDTFNQGIYYLENMANRSINSLDEAREKAYAVYILTQNSVITTSYIANILKYLDEYHKNTWQDDLTSVYLAASYKMLQMNEEAEKLLDRFTLNKPISKTDYQYYNPLIKYSQYLYLIAMHFPERLKDFDPKIVQDIALFAKDNYNSLSASYAIMASLAYADKINHVDEATIKVTSTDKEVTLKGNKVMIAELSVENKNIDLTSSSNGFFYQLLTSGYDKQLTENKEIVKGIEITKKYLDENNKEVSKVKLGDNITVEITMRSGSNKTLSNMVLIDLLPAGFELLPDNNHINILERTQEVMIWKPIYINNRDDRVMIFGTISDQKMTYQYKIKAVNKGIFSTPAIYSEAMYDPQTYYRGVIGNIIVE.

Positions Met-1–Ala-23 are cleaved as a signal peptide. The segment at residues Cys-1441–Gln-1444 is a cross-link (isoglutamyl cysteine thioester (Cys-Gln)).

It belongs to the protease inhibitor I39 (alpha-2-macroglobulin) family. Bacterial alpha-2-macroglobulin subfamily.

Its function is as follows. Protects the bacterial cell from host peptidases. The chain is Alpha-2-macroglobulin from Rickettsia conorii (strain ATCC VR-613 / Malish 7).